A 300-amino-acid polypeptide reads, in one-letter code: Putative S-adenosyl-L-methionine-dependent methyltransferase MUL_0817 (300 aa).

Residues aspartate 127 and 156–157 contribute to the S-adenosyl-L-methionine site; that span reads DL.

The protein belongs to the UPF0677 family.

Exhibits S-adenosyl-L-methionine-dependent methyltransferase activity. This chain is Putative S-adenosyl-L-methionine-dependent methyltransferase MUL_0817, found in Mycobacterium ulcerans (strain Agy99).